The following is a 103-amino-acid chain: Small ribosomal subunit protein eS25 (103 aa).

The tract at residues 1-23 (MGGEDMAKKKAPSAKEGEKQQGF) is disordered.

Belongs to the eukaryotic ribosomal protein eS25 family.

This Aeropyrum pernix (strain ATCC 700893 / DSM 11879 / JCM 9820 / NBRC 100138 / K1) protein is Small ribosomal subunit protein eS25 (rps25e).